A 172-amino-acid polypeptide reads, in one-letter code: C-phycocyanin beta chain (172 aa).

Residue asparagine 72 is modified to N4-methylasparagine. 2 residues coordinate (2R,3E)-phycocyanobilin: cysteine 82 and cysteine 153.

It belongs to the phycobiliprotein family. As to quaternary structure, heterodimer of an alpha and a beta subunit, which further assembles into trimers and the trimers into hexamers. The basic functional unit of phycobiliproteins is a ring-shaped hexamer formed from two back-to-back trimers contacting via the alpha chain subunits. The trimers are composed of alpha/beta subunit heterodimers arranged around a three-fold axis of symmetry. The phycoerythrins also contain a gamma subunit which is located in the center of the hexamer. Post-translationally, contains two covalently linked bilin chromophores.

It is found in the plastid. It localises to the chloroplast thylakoid membrane. Functionally, light-harvesting photosynthetic bile pigment-protein from the phycobiliprotein complex (phycobilisome, PBS). Phycocyanin is the major phycobiliprotein in the PBS rod. In Rhodella violacea (Red alga), this protein is C-phycocyanin beta chain (cpcB).